The sequence spans 481 residues: Tryptophan--tRNA ligase, cytoplasmic (481 aa).

Positions 12-68 (SPLELFNSIATQGELVRSLKAGNAPKDEIDSAVKMLLSLKMSYKAAMGEEYKAGCPP) constitute a WHEP-TRS domain. The residue at position 158 (K158) is an N6-succinyllysine. A 'HIGH' region motif is present at residues 168 to 177 (PSSEAMHLGH). The 'KMSKS' region signature appears at 353 to 357 (KMSAS). S355 carries the phosphoserine modification.

This sequence belongs to the class-I aminoacyl-tRNA synthetase family. Homodimer. Interacts with oxidized form of GAPDH. Post-translationally, proteolytic cleavage generates 2 forms; T1-TrpRS and T2-TrpRS. In terms of tissue distribution, isoform 2 is widely expressed, isoform 1 is found only in embryonic stem cells.

The protein resides in the cytoplasm. It catalyses the reaction tRNA(Trp) + L-tryptophan + ATP = L-tryptophyl-tRNA(Trp) + AMP + diphosphate + H(+). Functionally, catalyzes the attachment of tryptophan to tRNA(Trp) in a two-step reaction: tryptophan is first activated by ATP to form Trp-AMP and then transferred to the acceptor end of the tRNA(Trp). Could also possess an angiostatic activity. This chain is Tryptophan--tRNA ligase, cytoplasmic, found in Mus musculus (Mouse).